The chain runs to 122 residues: Large ribosomal subunit protein uL14 (122 aa).

It belongs to the universal ribosomal protein uL14 family. Part of the 50S ribosomal subunit. Forms a cluster with proteins L3 and L19. In the 70S ribosome, L14 and L19 interact and together make contacts with the 16S rRNA in bridges B5 and B8.

Functionally, binds to 23S rRNA. Forms part of two intersubunit bridges in the 70S ribosome. The chain is Large ribosomal subunit protein uL14 from Rhizobium meliloti (strain 1021) (Ensifer meliloti).